A 100-amino-acid chain; its full sequence is uncharacterized protein (100 aa).

Transmembrane regions (helical) follow at residues 9–29 (VYTY…SWVV), 41–61 (PYLI…ITAP), and 72–92 (SIPF…FLGI).

The protein localises to the membrane. This is an uncharacterized protein from Saccharomyces cerevisiae (strain ATCC 204508 / S288c) (Baker's yeast).